Reading from the N-terminus, the 259-residue chain is MKLSVKIAGVLTVAAAAMTAKMYATAKGNHLKTHTFPLSKMKGKPPLTIFFISDIHKRLIDQDLLEKARSHAPHLVIIGGDLAEGGVPSARIEENIKRLVHFGVPIVFVWGNNDYEVRQHKLYSIFKAHGVITLRNESVPFSYNGHTIAIAGVDDIRMEMDHYEEAIKELDESQLNILVCHNPEIHEQINEDDGIDVILSGHTHGGQIRFGKFGPYELGKTGIVKNAAYLISNGYGTTKVPLRLGAEPETHIVTLCGPE.

A signal peptide (or 26) is located at residues 1 to 19; sequence MKLSVKIAGVLTVAAAAMT. ATP is bound at residue 214 to 221; sequence GPYELGKT.

This is an uncharacterized protein from Bacillus subtilis (strain 168).